Here is a 380-residue protein sequence, read N- to C-terminus: MPTESLQTGSMVKPVSPAGTFTSAVPLRILNKGPDYFRRQAEPNPKRLSAVERLEADKAKYVKSQEVINAKQEPVKPAVLAKPPVCPAAKRALGSPTLKGFGGGGGGAKSEGGAPRETLKLEILKNILNSSEGSSTGSGHKHSARNWPAPRADAAELHRHSFAESLRARPAPGRGSPQEGGSHVGRRPPEPTSSAAAAADAFLHVSHSSSDIRQGPGARPLKAILPCSSSAPPLPPKPKVAAPAAVKSPEAEAAEPAGGVGRRPSLQRSKSDLSDRYFRVDADVERFFNYCGLDPEELENLGMENFARANSDIISLNFRSASMISSDCEQSQDSNSDLRNDDSANDRVPYGISAIERNARIIKWLYSIKQARESQKVSHV.

The segment at 92 to 272 (ALGSPTLKGF…RPSLQRSKSD (181 aa)) is disordered. Gly residues predominate over residues 100 to 110 (GFGGGGGGAKS). Residues 127–138 (ILNSSEGSSTGS) show a composition bias toward polar residues. Residues 153 to 162 (DAAELHRHSF) show a composition bias toward basic and acidic residues. A compositionally biased stretch (low complexity) spans 239–248 (KVAAPAAVKS). Phosphoserine is present on residues serine 248 and serine 311. Positions 327 to 347 (DCEQSQDSNSDLRNDDSANDR) are disordered. Basic and acidic residues predominate over residues 336–345 (SDLRNDDSAN).

Belongs to the FAM110 family.

The protein localises to the cytoplasm. It is found in the cytoskeleton. The protein resides in the microtubule organizing center. Its subcellular location is the centrosome. The protein is Protein FAM110B (FAM110B) of Bos taurus (Bovine).